We begin with the raw amino-acid sequence, 32 residues long: Jingzhaotoxin F4-32.60 (32 aa).

3 disulfide bridges follow: Cys-2-Cys-17, Cys-9-Cys-22, and Cys-16-Cys-29. Aspartic acid 1-amide is present on Asp-31.

It belongs to the neurotoxin 10 (Hwtx-1) family. 30 (Jztx-14) subfamily. Amidated as well as non-amidated forms are found in the venom. As to expression, expressed by the venom gland.

The protein resides in the secreted. Functionally, probable ion channel inhibitor. The sequence is that of Jingzhaotoxin F4-32.60 from Chilobrachys guangxiensis (Chinese earth tiger tarantula).